A 428-amino-acid chain; its full sequence is Enolase (428 aa).

A (2R)-2-phosphoglycerate-binding site is contributed by Q164. E208 serves as the catalytic Proton donor. Mg(2+) contacts are provided by D245, E286, and D313. Residues K338, R367, S368, and K389 each contribute to the (2R)-2-phosphoglycerate site. K338 serves as the catalytic Proton acceptor.

The protein belongs to the enolase family. The cofactor is Mg(2+).

The protein resides in the cytoplasm. It localises to the secreted. The protein localises to the cell surface. The enzyme catalyses (2R)-2-phosphoglycerate = phosphoenolpyruvate + H2O. It functions in the pathway carbohydrate degradation; glycolysis; pyruvate from D-glyceraldehyde 3-phosphate: step 4/5. Functionally, catalyzes the reversible conversion of 2-phosphoglycerate (2-PG) into phosphoenolpyruvate (PEP). It is essential for the degradation of carbohydrates via glycolysis. This chain is Enolase, found in Pyrococcus horikoshii (strain ATCC 700860 / DSM 12428 / JCM 9974 / NBRC 100139 / OT-3).